A 1244-amino-acid polypeptide reads, in one-letter code: ATP-dependent RNA helicase DHX8 (1244 aa).

Lys-140 is covalently cross-linked (Glycyl lysine isopeptide (Lys-Gly) (interchain with G-Cter in SUMO2)). Disordered regions lie at residues 152 to 289 (LMPS…PAIG) and 361 to 396 (DVDQ…RPTH). Over residues 160-169 (EKQRDPEHRD) the composition is skewed to basic and acidic residues. Basic residues predominate over residues 170–179 (RTKKKKRSRS). A compositionally biased stretch (basic and acidic residues) spans 180 to 220 (RDRDRDRDRDRDRDRDRDRDRDKDRERDRDRERDRERDRER). Basic residues predominate over residues 221 to 234 (DHKRRHRSRSRSHS). A compositionally biased stretch (basic and acidic residues) spans 256-283 (FKDRKDREKYGERNLDRWRDKHVDRPPP). The 72-residue stretch at 289–360 (GDIYNGKVTS…TGTKTSLSMK (72 aa)) folds into the S1 motif domain. The span at 386 to 395 (TSMRNPDRPT) shows a compositional bias: basic and acidic residues. Phosphoserine is present on Ser-419. Residue Lys-423 forms a Glycyl lysine isopeptide (Lys-Gly) (interchain with G-Cter in SUMO2) linkage. Ser-484 bears the Phosphoserine mark. Residues 599-762 (VQAVHDNQIL…FYEAPIFTIP (164 aa)) form the Helicase ATP-binding domain. 612 to 619 (GETGSGKT) is an ATP binding site. The DEAH box motif lies at 709 to 712 (DEAH). A Helicase C-terminal domain is found at 780–960 (YLDASLITVM…STVLSLKAMG (181 aa)).

This sequence belongs to the DEAD box helicase family. DEAH subfamily. DDX8/PRP22 sub-subfamily. As to quaternary structure, identified in the spliceosome C complex. Interacts with ARRB2; the interaction is detected in the nucleus upon OR1D2 stimulation. Interacts with SRRM2. Interacts with CACTIN.

The protein resides in the nucleus. The enzyme catalyses ATP + H2O = ADP + phosphate + H(+). In terms of biological role, involved in pre-mRNA splicing as component of the spliceosome. Facilitates nuclear export of spliced mRNA by releasing the RNA from the spliceosome. The protein is ATP-dependent RNA helicase DHX8 (Dhx8) of Mus musculus (Mouse).